The following is a 392-amino-acid chain: Arogenate dehydratase/prephenate dehydratase 1, chloroplastic (392 aa).

The transit peptide at 1-48 (MALRCFPIWVCPQTTHHRSPLMGLAEFDADKRRRFCLWECSSSASQRA) directs the protein to the chloroplast. The 176-residue stretch at 107-282 (RISFQGIPGA…NVTRFLILAR (176 aa)) folds into the Prephenate dehydratase domain. Residues 296-387 (SIVFSLEEGP…SFIRILGCYP (92 aa)) enclose the ACT domain.

As to expression, expressed in roots, leaves, stems, flowers and siliques.

The protein resides in the plastid. The protein localises to the chloroplast stroma. It carries out the reaction L-arogenate + H(+) = L-phenylalanine + CO2 + H2O. The enzyme catalyses prephenate + H(+) = 3-phenylpyruvate + CO2 + H2O. It participates in amino-acid biosynthesis; L-phenylalanine biosynthesis; L-phenylalanine from L-arogenate: step 1/1. Its pathway is amino-acid biosynthesis; L-phenylalanine biosynthesis; phenylpyruvate from prephenate: step 1/1. Its function is as follows. Converts the prephenate produced from the shikimate-chorismate pathway into phenylalanine. Dehydratase that uses arogenate and prephenate as substrates. Utilzes more efficiently arogenate than prephenate. The protein is Arogenate dehydratase/prephenate dehydratase 1, chloroplastic of Arabidopsis thaliana (Mouse-ear cress).